The sequence spans 83 residues: Putative beta-neurotoxin RjAa12f (83 aa).

Residues 1–18 (MKILIFIIASFMLIGVEC) form the signal peptide. The 64-residue stretch at 19-82 (KEGYPMGRDG…VWDSSTNKCG (64 aa)) folds into the LCN-type CS-alpha/beta domain. 4 disulfide bridges follow: Cys29-Cys81, Cys33-Cys55, Cys40-Cys62, and Cys44-Cys64. A propeptide is located at residue Gly83.

In terms of processing, contains 4 disulfide bonds. In terms of tissue distribution, expressed by the venom gland.

It is found in the secreted. In terms of biological role, beta toxins bind voltage-independently at site-4 of sodium channels (Nav) and shift the voltage of activation toward more negative potentials thereby affecting sodium channel activation and promoting spontaneous and repetitive firing. This toxin is lethal to insects (A.domestica). It is not toxic to mice and does not affect mammal F11 sodium channels. This Rhopalurus junceus (Caribbean blue scorpion) protein is Putative beta-neurotoxin RjAa12f.